Here is a 636-residue protein sequence, read N- to C-terminus: DNA mismatch repair protein MutL (636 aa).

The interval 341 to 420 is disordered; the sequence is APLINKPEQQ…PGAEEYTPEA (80 aa). Basic and acidic residues predominate over residues 348–358; sequence EQQKLDFDQVR.

Belongs to the DNA mismatch repair MutL/HexB family.

In terms of biological role, this protein is involved in the repair of mismatches in DNA. It is required for dam-dependent methyl-directed DNA mismatch repair. May act as a 'molecular matchmaker', a protein that promotes the formation of a stable complex between two or more DNA-binding proteins in an ATP-dependent manner without itself being part of a final effector complex. The protein is DNA mismatch repair protein MutL of Bacillus licheniformis (strain ATCC 14580 / DSM 13 / JCM 2505 / CCUG 7422 / NBRC 12200 / NCIMB 9375 / NCTC 10341 / NRRL NRS-1264 / Gibson 46).